We begin with the raw amino-acid sequence, 585 residues long: Epithelial sodium channel subunit gamma (585 aa).

Topologically, residues 1 to 55 are cytoplasmic; it reads MAPGEKIKAKIKKNLPVTGPQAPTIKELMRWYCLNTNTHGCRRIVVSRGRLRRLL. A helical membrane pass occupies residues 56–76; sequence WIGFTLTAVALILWQCALLVF. The Extracellular portion of the chain corresponds to 77–477; it reads SFYTVSVSIK…GGQLGLWMSC (401 aa). Cystine bridges form between Cys100–Cys219, Cys308–Cys393, Cys330–Cys389, Cys334–Cys385, Cys343–Cys370, and Cys345–Cys359. Asn207 carries an N-linked (GlcNAc...) asparagine glycan. Asn433 carries an N-linked (GlcNAc...) asparagine glycan. The chain crosses the membrane as a helical span at residues 478 to 498; the sequence is SVVCVIEIIEVFFIDFFSIIA. The Cytoplasmic segment spans residues 499-585; sequence RRQWQKAKEW…LTDTQMLDEL (87 aa). The segment at 513–534 is disordered; the sequence is QAPPCPEAPRSPQGQDNPALDI. The short motif at 559 to 563 is the PY motif; recruits WW domain-containing proteins and is thereby required for ubiquitination and inhibition of the channel by NEDD4 and NEDD4L element; the sequence is PPPKY.

It belongs to the amiloride-sensitive sodium channel (TC 1.A.6) family. SCNN1G subfamily. Component of the heterotrimeric epithelial sodium channel (ENaC) composed of an alpha/SCNN1A, a beta/SCNN1B and a gamma/SCNN1G subunit. An additional delta/SCNN1D subunit can replace the alpha/SCNN1A subunit to form an alternative channel with specific properties. Interacts with WWP1 (via WW domains). Interacts with WWP2 (via WW domains); inhibits the channel. Interacts with the full-length immature form of PCSK9 (pro-PCSK9); inhibits ENaC by promoting its proteasomal degradation. Interacts with BPIFA1; the interaction is indirect via SCNN1B and inhibits the proteolytic maturation of SCNN1A and SCNN1G and the activation of ENaC. Post-translationally, phosphorylated on serine and threonine residues. Aldosterone and insulin increase the basal level of phosphorylation. In terms of processing, ubiquitinated. Can be ubiquitinated at multiple sites and undergo monoubiquitination and polyubiquitination. Ubiquitination by NEDD4 or NEDD4L inhibits the ENaC channel through endocytosis, intracellular retention and degradation of its individual subunits. ENaC is activated through the proteolytic maturation of its subunits. Furin cleaves the SCNN1G subunit first, followed by cleavage by prostasin (PRSS8), which results in a stepwise increase in the open probability of the channel due to the release of an inhibitory tract. BPIFA1, which is recruited by the SCNN1B subunit, prevents the proteolytic activation of ENaC. Post-translationally, N-glycosylated. N-linked glycans are processed to complex type during ENaC complex assembly and transport to the plasma membrane.

It is found in the apical cell membrane. The enzyme catalyses Na(+)(in) = Na(+)(out). Its activity is regulated as follows. Originally identified and characterized by its inhibition by the diuretic drug amiloride. Its function is as follows. This is one of the three pore-forming subunits of the heterotrimeric epithelial sodium channel (ENaC), a critical regulator of sodium balance and fluid homeostasis. ENaC operates in epithelial tissues, where it mediates the electrodiffusion of sodium ions from extracellular fluid through the apical membrane of cells, with water following osmotically. It plays a key role in maintaining sodium homeostasis through electrogenic sodium reabsorption in the kidneys. Additionally, ENaC is essential for airway surface liquid homeostasis, which is crucial for proper mucus clearance. In Pan troglodytes (Chimpanzee), this protein is Epithelial sodium channel subunit gamma.